The sequence spans 639 residues: tRNA uridine 5-carboxymethylaminomethyl modification enzyme MnmG (639 aa).

An FAD-binding site is contributed by 15–20 (GAGHAG). 276–290 (GPRYCPSIEDKIVRF) serves as a coordination point for NAD(+).

The protein belongs to the MnmG family. As to quaternary structure, homodimer. Heterotetramer of two MnmE and two MnmG subunits. FAD is required as a cofactor.

Its subcellular location is the cytoplasm. Its function is as follows. NAD-binding protein involved in the addition of a carboxymethylaminomethyl (cmnm) group at the wobble position (U34) of certain tRNAs, forming tRNA-cmnm(5)s(2)U34. The protein is tRNA uridine 5-carboxymethylaminomethyl modification enzyme MnmG of Streptococcus gordonii (strain Challis / ATCC 35105 / BCRC 15272 / CH1 / DL1 / V288).